Here is a 237-residue protein sequence, read N- to C-terminus: Aspartate/glutamate leucyltransferase (237 aa).

The protein belongs to the R-transferase family. Bpt subfamily.

The protein resides in the cytoplasm. It catalyses the reaction N-terminal L-glutamyl-[protein] + L-leucyl-tRNA(Leu) = N-terminal L-leucyl-L-glutamyl-[protein] + tRNA(Leu) + H(+). The catalysed reaction is N-terminal L-aspartyl-[protein] + L-leucyl-tRNA(Leu) = N-terminal L-leucyl-L-aspartyl-[protein] + tRNA(Leu) + H(+). Functions in the N-end rule pathway of protein degradation where it conjugates Leu from its aminoacyl-tRNA to the N-termini of proteins containing an N-terminal aspartate or glutamate. In Shewanella amazonensis (strain ATCC BAA-1098 / SB2B), this protein is Aspartate/glutamate leucyltransferase.